A 54-amino-acid polypeptide reads, in one-letter code: Synaptosomal-associated protein 25 (54 aa).

Belongs to the SNAP-25 family. In terms of assembly, part of the SNARE core complex containing SNAP25, VAMP2 and STX1A; this complex binds CPLX1. Found in a complex containing SYT1, SV2B and syntaxin-1. Found in a ternary complex with STX1A and VAMP8. Interacts with HSC70 and with SYT9, forming a complex with DNAJC5. The interaction with SYT9 is inhibited in presence of calcium. Isoform 1 and isoform 2 interact with BLOC1S6. Interacts with CENPF. Interacts with EQTN. Interacts with HGS. Interacts with KCNB1 (via N-terminus); reduces the voltage-dependent potassium channel KCNB1 activity in pancreatic beta cells. Interacts with OTOF. Interacts with RIMS1. Interacts with SNAPIN. Interacts with STXBP6. Interacts with TRIM9. Interacts with ZDHHC13 (via ANK repeats). Interacts with ZDHHC17 (via ANK repeats). Associates with the BLOC-1 complex. Interacts with PLCL1 (via C2 domain). Interacts with PRRT2; this interaction may impair the formation of the SNARE complex. Interacts with alpha-synuclein/SNCA. Interacts with PRPH2. Interacts with ROM1. Interacts with STX3. In terms of processing, the N-terminus is blocked.

The protein resides in the cytoplasm. Its subcellular location is the perinuclear region. It localises to the cell membrane. The protein localises to the synapse. It is found in the synaptosome. The protein resides in the photoreceptor inner segment. T-SNARE involved in the molecular regulation of neurotransmitter release. May play an important role in the synaptic function of specific neuronal systems. Associates with proteins involved in vesicle docking and membrane fusion. Regulates plasma membrane recycling through its interaction with CENPF. Modulates the gating characteristics of the delayed rectifier voltage-dependent potassium channel KCNB1 in pancreatic beta cells. This Oryctolagus cuniculus (Rabbit) protein is Synaptosomal-associated protein 25 (SNAP25).